The following is a 328-amino-acid chain: Glucokinase (328 aa).

Residue 16–21 participates in ATP binding; it reads ADIGGT.

This sequence belongs to the bacterial glucokinase family.

It is found in the cytoplasm. The catalysed reaction is D-glucose + ATP = D-glucose 6-phosphate + ADP + H(+). The protein is Glucokinase of Neisseria meningitidis serogroup C (strain 053442).